The sequence spans 252 residues: Short-chain dehydrogenase anuI (252 aa).

Residues Leu18, Asp65, Asn92, Tyr171, Lys175, and Thr206 each coordinate NADP(+). Tyr171 acts as the Proton acceptor in catalysis. The active-site Proton donor is Tyr171. Lys175 serves as the catalytic Lowers pKa of active site Tyr.

The protein belongs to the short-chain dehydrogenases/reductases (SDR) family.

Functionally, highly reducing polyketide synthase; part of the gene cluster that mediates the biosynthesis of annullatin D, an alkylated aromatic polyketide with a fused dihydrobenzofuran lactone ring system that exhibits potent agonistic activities toward the cannabinoid receptors. AnuI does not seem to play a role within the pathway. The annullatin backbone 2-hydroxymethyl-3-pentylphenol is assembled from one acetyl-CoA starter unit and 5 malonyl-CoA elongation units by cooperation of the highly reducing polyketide synthase anuA, the short-chain dehydrogenase anuB and the oxidoreductase anuC, before being hydroxylated at the C-5 alkyl chain by the cytochrome P450 monooxygenase anuE to form (8S)-annullatin E. The prenyltransferase anuH subsequently installs one isoprenyl group at the benzene ring to form (8S)-annullatin J. Enzymatic or nonenzymatic dihydro-benzofuran ring formation between the prenyl and the phenolic hydroxyl groups in (8S)-annullatin J results in two diastereomers (2S,9S)-annullatin H and compound 12. The intermediate (2S,9S)-annullatin H is then converted to (2S,9S)-annullatin D by the FAD-linked oxidoreductase anuG-catalyzed five-member lactone ring formation. The isomer 12 acts as a substrate for the short-chain dehydrogenase anuF and is oxidized to (2R)-annullatin F, which is subsequently acetylated by an acetyltransferase leading to (2R)-annullatin G formation. The remaining enzymes identified within the cluster, anuD, anuI and anuJ, seem not to be involved in annullatin biosynthesis. This Penicillium roqueforti (strain FM164) protein is Short-chain dehydrogenase anuI.